Consider the following 195-residue polypeptide: Adenylate kinase (195 aa).

Gly11–Thr16 contributes to the ATP binding site. The segment at Ser31–Val60 is NMP. AMP-binding positions include Thr32, Arg37, Arg58–Val60, Gly86–Arg89, and Gln93. The segment at Leu127 to Asp137 is LID. Arg128 provides a ligand contact to ATP. AMP is bound by residues Arg134 and Arg145. Gln173 provides a ligand contact to ATP.

Belongs to the adenylate kinase family. Monomer.

The protein localises to the cytoplasm. It catalyses the reaction AMP + ATP = 2 ADP. It functions in the pathway purine metabolism; AMP biosynthesis via salvage pathway; AMP from ADP: step 1/1. Functionally, catalyzes the reversible transfer of the terminal phosphate group between ATP and AMP. Plays an important role in cellular energy homeostasis and in adenine nucleotide metabolism. The polypeptide is Adenylate kinase (Cyanothece sp. (strain PCC 7425 / ATCC 29141)).